A 123-amino-acid chain; its full sequence is Large ribosomal subunit protein bL12 (123 aa).

Belongs to the bacterial ribosomal protein bL12 family. In terms of assembly, homodimer. Part of the ribosomal stalk of the 50S ribosomal subunit. Forms a multimeric L10(L12)X complex, where L10 forms an elongated spine to which 2 to 4 L12 dimers bind in a sequential fashion. Binds GTP-bound translation factors.

Forms part of the ribosomal stalk which helps the ribosome interact with GTP-bound translation factors. Is thus essential for accurate translation. The chain is Large ribosomal subunit protein bL12 from Rhodopseudomonas palustris (strain BisA53).